The following is a 66-amino-acid chain: Probable Sec-independent protein translocase protein TatE (66 aa).

A helical transmembrane segment spans residues 1-21 (MEGISITKLLVIAVLIVLLFG). Residues 46-66 (ETPAAKKSDGAEAAPRVENKE) are disordered.

It belongs to the TatA/E family. TatE subfamily.

It is found in the cell inner membrane. Part of the twin-arginine translocation (Tat) system that transports large folded proteins containing a characteristic twin-arginine motif in their signal peptide across membranes. TatE shares overlapping functions with TatA. In Edwardsiella piscicida, this protein is Probable Sec-independent protein translocase protein TatE.